The sequence spans 142 residues: Large ribosomal subunit protein uL13 (142 aa).

Belongs to the universal ribosomal protein uL13 family. As to quaternary structure, part of the 50S ribosomal subunit.

This protein is one of the early assembly proteins of the 50S ribosomal subunit, although it is not seen to bind rRNA by itself. It is important during the early stages of 50S assembly. The chain is Large ribosomal subunit protein uL13 from Xylella fastidiosa (strain M23).